A 182-amino-acid polypeptide reads, in one-letter code: CASP-like protein 5A1 (182 aa).

At 1–47 the chain is on the cytoplasmic side; sequence MEMASHPAVHPVALPPPYQAVGPPAPPAVRINDFPGSPGTLMGLALR. Residues 48-68 traverse the membrane as a helical segment; the sequence is FAQLGFALTALCIMVSIVGFS. Residues 69 to 72 lie on the Extracellular side of the membrane; that stretch reads SVTA. Residues 73-93 form a helical membrane-spanning segment; the sequence is FCFLVAAMVLQCIWSLCLGVL. Residues 94–117 lie on the Cytoplasmic side of the membrane; the sequence is DCYALLTKRSLRNSLILSFFVVGD. The helical transmembrane segment at 118–138 threads the bilayer; that stretch reads WITSTMTFAGACAAAGITVLI. Residues 139 to 158 lie on the Extracellular side of the membrane; that stretch reads DNDLNQCGPNHCNRFEAAAA. Residues 159–179 form a helical membrane-spanning segment; it reads MAFMSWVITTISFFLSFWILV. The Cytoplasmic segment spans residues 180 to 182; sequence TCR.

Belongs to the Casparian strip membrane proteins (CASP) family. Homodimer and heterodimers.

The protein resides in the cell membrane. The polypeptide is CASP-like protein 5A1 (Physcomitrium patens (Spreading-leaved earth moss)).